We begin with the raw amino-acid sequence, 408 residues long: 8-amino-7-oxononanoate synthase (408 aa).

Arg-20 provides a ligand contact to substrate. 119–120 is a pyridoxal 5'-phosphate binding site; the sequence is GY. A substrate-binding site is contributed by His-144. Pyridoxal 5'-phosphate is bound by residues Ser-190, His-218, and Thr-246. At Lys-249 the chain carries N6-(pyridoxal phosphate)lysine. Thr-372 contributes to the substrate binding site.

Belongs to the class-II pyridoxal-phosphate-dependent aminotransferase family. BioF subfamily. In terms of assembly, homodimer. Requires pyridoxal 5'-phosphate as cofactor.

It catalyses the reaction 6-carboxyhexanoyl-[ACP] + L-alanine + H(+) = (8S)-8-amino-7-oxononanoate + holo-[ACP] + CO2. It functions in the pathway cofactor biosynthesis; biotin biosynthesis. Functionally, catalyzes the decarboxylative condensation of pimeloyl-[acyl-carrier protein] and L-alanine to produce 8-amino-7-oxononanoate (AON), [acyl-carrier protein], and carbon dioxide. This chain is 8-amino-7-oxononanoate synthase, found in Leptothrix cholodnii (strain ATCC 51168 / LMG 8142 / SP-6) (Leptothrix discophora (strain SP-6)).